The following is a 166-amino-acid chain: Phosphopantetheine adenylyltransferase (166 aa).

Threonine 10 is a binding site for substrate. ATP-binding positions include 10 to 11 and histidine 18; that span reads TF. Residues lysine 42, leucine 75, and arginine 89 each coordinate substrate. ATP-binding positions include 90–92, glutamate 100, and 125–131; these read GVR and YTYVAST.

It belongs to the bacterial CoaD family. In terms of assembly, homohexamer. It depends on Mg(2+) as a cofactor.

The protein resides in the cytoplasm. It carries out the reaction (R)-4'-phosphopantetheine + ATP + H(+) = 3'-dephospho-CoA + diphosphate. Its pathway is cofactor biosynthesis; coenzyme A biosynthesis; CoA from (R)-pantothenate: step 4/5. Functionally, reversibly transfers an adenylyl group from ATP to 4'-phosphopantetheine, yielding dephospho-CoA (dPCoA) and pyrophosphate. The polypeptide is Phosphopantetheine adenylyltransferase (Chlorobaculum parvum (strain DSM 263 / NCIMB 8327) (Chlorobium vibrioforme subsp. thiosulfatophilum)).